A 570-amino-acid chain; its full sequence is Interleukin-1 receptor accessory protein (570 aa).

An N-terminal signal peptide occupies residues Met1 to Ala20. 3 consecutive Ig-like C2-type domains span residues Ser21 to Pro128, Pro141 to Thr230, and Pro242 to Lys348. At Ser21–Thr367 the chain is on the extracellular side. 5 cysteine pairs are disulfide-bonded: Cys24–Cys122, Cys47–Cys114, Cys137–Cys181, Cys160–Cys212, and Cys266–Cys332. An N-linked (GlcNAc...) asparagine glycan is attached at Asn57. An essential for interaction with PTPRD region spans residues Ile69 to Phe85. N-linked (GlcNAc...) asparagine glycans are attached at residues Asn107, Asn111, and Asn118. Residues Asn196, Asn209, and Asn299 are each glycosylated (N-linked (GlcNAc...) asparagine). The helical transmembrane segment at Val368–Phe388 threads the bilayer. Residues Tyr389 to Val570 are Cytoplasmic-facing. Residues Lys403–Met546 form the TIR domain. Glu482 is an active-site residue. The tract at residues Lys549 to Val570 is disordered. A Phosphoserine modification is found at Ser557. The span at Asp558–Val570 shows a compositional bias: polar residues.

The protein belongs to the interleukin-1 receptor family. In terms of assembly, the interleukin-36 receptor complex is a heterodimer of IL1RL2 and IL1RAP; the association is inhibited by IL36RN. The interleukin-1 receptor complex is a heterodimer of IL1R1 and IL1RAP. Associates with IL1R2 to form a non-signaling interleukin-1 receptor complex. Isoform 4 interacts with IL1R1 in an interleukin-1-dependent manner. Interacts with IL-33-bound IL1RL1 to form the minimal interleukin-33 signaling complex with a 1:1:1 stoichiometry. Interacts with KIT (independently of stimulation with KITLG/SCF). A mast cell-specific KITLG/SCF-induced interleukin-33 signaling complex contains IL1RL1, IL1RAP, KIT and MYD88. Interacts (via the first immunoglobilin domain) with PTPRD (via the third immunoglobilin domain); induces pre- and postsynaptic differentiation of neurons. In terms of tissue distribution, detected in liver, skin, placenta, thymus and lung. Isoform 4 is predominantly expressed in brain. Overexpressed on candidate chronic myeloid leukemia (CML) stem cells, hematopoietic stem cells and mononuclear cells of patients with acute myeloid leukemia (AML). Overexpressed in patients with chronic obstructive pulmonary disease (COPD). Expressed in T-helper 1 (Th1) and T-helper 2 (Th2) cell subsets.

The protein localises to the cell membrane. It is found in the secreted. It catalyses the reaction NAD(+) + H2O = ADP-D-ribose + nicotinamide + H(+). Coreceptor for IL1RL2 in the IL-36 signaling system. Coreceptor with IL1R1 in the IL-1 signaling system. Associates with IL1R1 bound to IL1B to form the high affinity interleukin-1 receptor complex which mediates interleukin-1-dependent activation of NF-kappa-B and other pathways. Signaling involves the recruitment of adapter molecules such as TOLLIP, MYD88, and IRAK1 or IRAK2 via the respective TIR domains of the receptor/coreceptor subunits. Recruits TOLLIP to the signaling complex. Does not bind to interleukin-1 alone; binding of IL1RN to IL1R1, prevents its association with IL1R1 to form a signaling complex. The cellular response is modulated through a non-signaling association with the membrane IL1R2 decoy receptor. Coreceptor for IL1RL1 in the IL-33 signaling system. Can bidirectionally induce pre- and postsynaptic differentiation of neurons by trans-synaptically binding to PTPRD. May play a role in IL1B-mediated costimulation of IFNG production from T-helper 1 (Th1) cells. Functionally, associates with secreted ligand-bound IL1R2 and increases the affinity of secreted IL1R2 for IL1B; this complex formation may be the dominant mechanism for neutralization of IL1B by secreted/soluble receptors. Enhances the ability of secreted IL1R1 to inhibit IL-33 signaling. In terms of biological role, unable to mediate canonical IL-1 signaling. Required for Src phosphorylation by IL1B. May be involved in IL1B-potentiated NMDA-induced calcium influx in neurons. This is Interleukin-1 receptor accessory protein (IL1RAP) from Homo sapiens (Human).